The following is a 320-amino-acid chain: UV DNA damage endonuclease (320 aa).

Belongs to the uve1/UvsE family.

Functionally, component in a DNA repair pathway. Removal of UV LIGHT damaged nucleotides. Recognizes pyrimidine dimers and cleave a phosphodiester bond immediately 5' to the lesion. This is UV DNA damage endonuclease from Bacillus pumilus (strain SAFR-032).